The chain runs to 910 residues: Seizure 6-like protein 2 (910 aa).

The first 27 residues, 1-27 (MGTPRAQHPPPPQLLFLILLSCPWIQG), serve as a signal peptide directing secretion. Over 28–844 (LPLKEEEILP…DPSRQLEGGN (817 aa)) the chain is Extracellular. The O-glycosylated at one site stretch occupies residues 41 to 48 (SETPTVAS). Residues 65 to 152 (EMGYLPGSDR…PLGPEGGEEE (88 aa)) are disordered. Over residues 123-145 (LTPPPGTTAPPPPSPASPGPPLG) the composition is skewed to pro residues. An intrachain disulfide couples Cys-173 to Cys-202. The CUB 1 domain occupies 173–286 (CNNNISEGEG…GGFRIHYQAY (114 aa)). Residues Asn-176, Asn-222, and Asn-247 are each glycosylated (N-linked (GlcNAc...) asparagine). Residues 288 to 347 (LSCGFPPRPAHGDVSVTDLHPGGTATFHCDSGYQLQGEETLICLNGTRPSWNGETPSCMA) form the Sushi 1 domain. Intrachain disulfides connect Cys-290-Cys-330, Cys-316-Cys-345, Cys-349-Cys-376, Cys-464-Cys-508, Cys-491-Cys-523, and Cys-527-Cys-553. N-linked (GlcNAc...) asparagine glycosylation is found at Asn-332, Asn-355, Asn-373, Asn-473, and Asn-517. Positions 349–459 (CGGTIHNATL…LLLSLRFEAF (111 aa)) constitute a CUB 2 domain. Residues 462-525 (DRCFAPFLAH…WNDTEPACKA (64 aa)) enclose the Sushi 2 domain. The CUB 3 domain occupies 527–638 (CGGELSEPAG…QGFVLHFKEV (112 aa)). Residue Asn-641 is glycosylated (N-linked (GlcNAc...) asparagine). 3 consecutive Sushi domains span residues 642–701 (DTCP…ACQK), 703–766 (MTCA…KCAL), and 769–830 (EPCL…LCKV). 6 disulfide bridges follow: Cys-644-Cys-686, Cys-672-Cys-699, Cys-705-Cys-747, Cys-733-Cys-764, Cys-771-Cys-813, and Cys-799-Cys-828. Residues 845–865 (LALAILLPLGLVIVLGSGVYI) traverse the membrane as a helical segment. The Cytoplasmic portion of the chain corresponds to 866–910 (YYTKLQGKSLFGFSGSHSYSPITVESDFSNPLYEAGDTREYEVSI).

This sequence belongs to the SEZ6 family. O-glycosylated with core 1 or possibly core 8 glycans.

Its subcellular location is the cell membrane. It localises to the endoplasmic reticulum membrane. Functionally, may contribute to specialized endoplasmic reticulum functions in neurons. In Homo sapiens (Human), this protein is Seizure 6-like protein 2 (SEZ6L2).